Consider the following 250-residue polypeptide: MSVKKQLEKLSILGATYHKNGWMPGTAGNLSVRILGESGFWVSGSGLDKNTLNKRNFLYVDLKSGRLSPSKNTKVEKGLKPSAETSIHRAVYCALDDIGCGLHVHTLESNLIRTNTSQHRPVALLELPAIEILKVYGIWKESPKVYVPVIYNFPNVQDISDCLESYLKEYKPVVPFCIIEKHGITVWGKDTVQANRNLEATDFILKYMISSRNLSNPEGKKNFPTENNTSESDRQKVYVAEFPVYPATFL.

Residues His103 and His105 each coordinate Zn(2+).

The protein belongs to the aldolase class II family. MtnB subfamily. It depends on Zn(2+) as a cofactor.

The enzyme catalyses 5-(methylsulfanyl)-D-ribulose 1-phosphate = 5-methylsulfanyl-2,3-dioxopentyl phosphate + H2O. The protein operates within amino-acid biosynthesis; L-methionine biosynthesis via salvage pathway; L-methionine from S-methyl-5-thio-alpha-D-ribose 1-phosphate: step 2/6. Its function is as follows. Catalyzes the dehydration of methylthioribulose-1-phosphate (MTRu-1-P) into 2,3-diketo-5-methylthiopentyl-1-phosphate (DK-MTP-1-P). This is Methylthioribulose-1-phosphate dehydratase from Leptospira borgpetersenii serovar Hardjo-bovis (strain JB197).